An 87-amino-acid polypeptide reads, in one-letter code: uncharacterized protein (87 aa).

This is an uncharacterized protein from Enterobacteria phage T4 (Bacteriophage T4).